We begin with the raw amino-acid sequence, 369 residues long: Holliday junction branch migration complex subunit RuvB (369 aa).

Positions 1–21 (MHKNENNRLLGSVSLPDDPDR) are disordered. The segment at 1–184 (MHKNENNRLL…FGIPIRLNFY (184 aa)) is large ATPase domain (RuvB-L). ATP-binding positions include leucine 23, arginine 24, glycine 65, lysine 68, threonine 69, threonine 70, 131–133 (EDY), arginine 174, tyrosine 184, and arginine 221. Residue threonine 69 coordinates Mg(2+). Residues 185–255 (TIEELEYIVK…IADTALSRLE (71 aa)) form a small ATPAse domain (RuvB-S) region. A head domain (RuvB-H) region spans residues 258–369 (HLGLDPLDRN…QKHLWEKDYD (112 aa)). Residues arginine 294, arginine 313, and arginine 318 each contribute to the DNA site.

The protein belongs to the RuvB family. In terms of assembly, homohexamer. Forms an RuvA(8)-RuvB(12)-Holliday junction (HJ) complex. HJ DNA is sandwiched between 2 RuvA tetramers; dsDNA enters through RuvA and exits via RuvB. An RuvB hexamer assembles on each DNA strand where it exits the tetramer. Each RuvB hexamer is contacted by two RuvA subunits (via domain III) on 2 adjacent RuvB subunits; this complex drives branch migration. In the full resolvosome a probable DNA-RuvA(4)-RuvB(12)-RuvC(2) complex forms which resolves the HJ.

The protein localises to the cytoplasm. The enzyme catalyses ATP + H2O = ADP + phosphate + H(+). The RuvA-RuvB-RuvC complex processes Holliday junction (HJ) DNA during genetic recombination and DNA repair, while the RuvA-RuvB complex plays an important role in the rescue of blocked DNA replication forks via replication fork reversal (RFR). RuvA specifically binds to HJ cruciform DNA, conferring on it an open structure. The RuvB hexamer acts as an ATP-dependent pump, pulling dsDNA into and through the RuvAB complex. RuvB forms 2 homohexamers on either side of HJ DNA bound by 1 or 2 RuvA tetramers; 4 subunits per hexamer contact DNA at a time. Coordinated motions by a converter formed by DNA-disengaged RuvB subunits stimulates ATP hydrolysis and nucleotide exchange. Immobilization of the converter enables RuvB to convert the ATP-contained energy into a lever motion, pulling 2 nucleotides of DNA out of the RuvA tetramer per ATP hydrolyzed, thus driving DNA branch migration. The RuvB motors rotate together with the DNA substrate, which together with the progressing nucleotide cycle form the mechanistic basis for DNA recombination by continuous HJ branch migration. Branch migration allows RuvC to scan DNA until it finds its consensus sequence, where it cleaves and resolves cruciform DNA. The sequence is that of Holliday junction branch migration complex subunit RuvB from Bartonella bacilliformis (strain ATCC 35685 / KC583 / Herrer 020/F12,63).